The chain runs to 882 residues: Valine--tRNA ligase (882 aa).

The 'HIGH' region signature appears at 45–55; sequence PNVTGKLHLGH. The short motif at 519–523 is the 'KMSKS' region element; the sequence is KMSKS. Residue Lys-522 participates in ATP binding. A coiled-coil region spans residues 808-882; that stretch reads LADLLNVEEE…RIAEMKKIKS (75 aa).

Belongs to the class-I aminoacyl-tRNA synthetase family. ValS type 1 subfamily. As to quaternary structure, monomer.

The protein resides in the cytoplasm. The enzyme catalyses tRNA(Val) + L-valine + ATP = L-valyl-tRNA(Val) + AMP + diphosphate. Functionally, catalyzes the attachment of valine to tRNA(Val). As ValRS can inadvertently accommodate and process structurally similar amino acids such as threonine, to avoid such errors, it has a 'posttransfer' editing activity that hydrolyzes mischarged Thr-tRNA(Val) in a tRNA-dependent manner. The polypeptide is Valine--tRNA ligase (Streptococcus pyogenes serotype M1).